We begin with the raw amino-acid sequence, 522 residues long: Cell polarity protein mod5 (522 aa).

Disordered regions lie at residues 1-83 (MSAL…PDGD), 119-158 (KRSA…FNSN), 170-192 (RRIL…TKSA), 251-285 (PLQP…SPVP), and 300-516 (YSPS…KLEK). Polar residues-rich tracts occupy residues 27–46 (PNTT…SAPS), 66–76 (LPSSKQDTGSS), and 131–146 (NGST…SPSE). At Ser43 the chain carries Phosphoserine. A compositionally biased stretch (low complexity) spans 258-285 (PANETPASSSSSAKARPVSVPDMSSPVP). Position 303 is a phosphoserine (Ser303). Residues 308 to 318 (KVAETDSESRK) show a composition bias toward basic and acidic residues. Positions 335 to 349 (GAQTQSTPNRISRSD) are enriched in polar residues. Position 350 is a phosphoserine (Ser350). 2 stretches are compositionally biased toward polar residues: residues 363–396 (NAST…TSTN) and 404–431 (DIPQ…TPQV). The span at 439 to 452 (SRSSPLPSASVPAL) shows a compositional bias: low complexity. Basic and acidic residues-rich tracts occupy residues 472-482 (HESEMPPHVTR) and 495-516 (PKEK…KLEK).

In terms of assembly, interacts with tea1 and tea3.

The protein localises to the cell membrane. With tea1, acts in a positive-feedback loop in the microtubule-mediated regulation of cell polarity. Involved in the anchoring of tea1 at the cortex as well as the correct localization of tea3. In Schizosaccharomyces pombe (strain 972 / ATCC 24843) (Fission yeast), this protein is Cell polarity protein mod5 (mod5).